The primary structure comprises 1088 residues: Leucine-rich repeat receptor-like protein kinase PEPR2 (1088 aa).

Positions Met-1–Ser-26 are cleaved as a signal peptide. The Extracellular portion of the chain corresponds to Leu-27–Ala-739. N-linked (GlcNAc...) asparagine glycans are attached at residues Asn-55, Asn-82, and Asn-122. 26 LRR repeats span residues Gly-75 to Leu-99, Lys-100 to Asn-122, Cys-123 to Ser-146, Leu-147 to Gly-170, Ile-172 to Asn-194, Cys-195 to Leu-219, Asn-221 to Cys-243, Lys-244 to Cys-267, Ser-269 to Leu-291, Arg-292 to Cys-315, Ser-316 to Leu-339, Lys-341 to Ile-363, Ser-365 to Leu-387, Lys-388 to Asn-411, Arg-412 to Gly-435, Gln-436 to Cys-459, Lys-460 to Leu-485, Tyr-487 to Cys-506, Lys-507 to Asn-529, Leu-530 to Cys-554, Arg-556 to Ser-577, Trp-578 to Leu-602, Asp-603 to Lys-627, Leu-629 to Leu-651, Ile-652 to Ser-676, and Asn-678 to Asn-698. Asn-149, Asn-159, Asn-183, Asn-194, Asn-209, Asn-229, Asn-266, Asn-279, and Asn-314 each carry an N-linked (GlcNAc...) asparagine glycan. 2 N-linked (GlcNAc...) asparagine glycosylation sites follow: Asn-373 and Asn-411. N-linked (GlcNAc...) asparagine glycans are attached at residues Asn-537 and Asn-568. N-linked (GlcNAc...) asparagine glycans are attached at residues Asn-658 and Asn-698. The helical transmembrane segment at Leu-740–Leu-760 threads the bilayer. At Cys-761–His-1088 the chain is on the cytoplasmic side. Residue Thr-791 is modified to Phosphothreonine. One can recognise a Protein kinase domain in the interval Leu-794–Val-1080. ATP-binding positions include Ile-800–Val-808 and Lys-822. Phosphotyrosine occurs at positions 868 and 908. Residue Asp-921 is the Proton acceptor of the active site. 2 positions are modified to phosphotyrosine: Tyr-962 and Tyr-969.

This sequence belongs to the protein kinase superfamily. Ser/Thr protein kinase family. Interacts with BAK1. Interacts with CLE14.

It localises to the cell membrane. It catalyses the reaction L-seryl-[protein] + ATP = O-phospho-L-seryl-[protein] + ADP + H(+). It carries out the reaction L-threonyl-[protein] + ATP = O-phospho-L-threonyl-[protein] + ADP + H(+). Its function is as follows. Acts as a receptor for PEP defense peptides. Unlike typical immune receptors, senses an endogenous elicitor that potentiates PAMP-inducible plant responses. This Arabidopsis thaliana (Mouse-ear cress) protein is Leucine-rich repeat receptor-like protein kinase PEPR2 (PEPR2).